The sequence spans 413 residues: uncharacterized protein (413 aa).

This is an uncharacterized protein from Mycobacterium tuberculosis (strain CDC 1551 / Oshkosh).